Reading from the N-terminus, the 127-residue chain is S-adenosylmethionine decarboxylase proenzyme (127 aa).

Residue serine 63 is the Schiff-base intermediate with substrate; via pyruvic acid of the active site. Residue serine 63 is modified to Pyruvic acid (Ser); by autocatalysis. Residue histidine 68 is the Proton acceptor; for processing activity of the active site. Cysteine 83 (proton donor; for catalytic activity) is an active-site residue.

It belongs to the prokaryotic AdoMetDC family. Type 1 subfamily. In terms of assembly, heterotetramer of two alpha and two beta chains arranged as a dimer of alpha/beta heterodimers. Pyruvate serves as cofactor. Post-translationally, is synthesized initially as an inactive proenzyme. Formation of the active enzyme involves a self-maturation process in which the active site pyruvoyl group is generated from an internal serine residue via an autocatalytic post-translational modification. Two non-identical subunits are generated from the proenzyme in this reaction, and the pyruvate is formed at the N-terminus of the alpha chain, which is derived from the carboxyl end of the proenzyme. The post-translation cleavage follows an unusual pathway, termed non-hydrolytic serinolysis, in which the side chain hydroxyl group of the serine supplies its oxygen atom to form the C-terminus of the beta chain, while the remainder of the serine residue undergoes an oxidative deamination to produce ammonia and the pyruvoyl group blocking the N-terminus of the alpha chain.

The catalysed reaction is S-adenosyl-L-methionine + H(+) = S-adenosyl 3-(methylsulfanyl)propylamine + CO2. The protein operates within amine and polyamine biosynthesis; S-adenosylmethioninamine biosynthesis; S-adenosylmethioninamine from S-adenosyl-L-methionine: step 1/1. Functionally, catalyzes the decarboxylation of S-adenosylmethionine to S-adenosylmethioninamine (dcAdoMet), the propylamine donor required for the synthesis of the polyamines spermine and spermidine from the diamine putrescine. The protein is S-adenosylmethionine decarboxylase proenzyme of Carboxydothermus hydrogenoformans (strain ATCC BAA-161 / DSM 6008 / Z-2901).